Reading from the N-terminus, the 65-residue chain is Small ribosomal subunit protein eS27 (65 aa).

Zn(2+)-binding residues include cysteine 20, cysteine 23, cysteine 39, and cysteine 42. A C4-type zinc finger spans residues 20–42 (CIDCGNEQIVFSHPATKVRCLVC).

The protein belongs to the eukaryotic ribosomal protein eS27 family. Part of the 30S ribosomal subunit. Zn(2+) serves as cofactor.

This Thermococcus gammatolerans (strain DSM 15229 / JCM 11827 / EJ3) protein is Small ribosomal subunit protein eS27.